Here is a 452-residue protein sequence, read N- to C-terminus: Eukaryotic translation initiation factor 3 subunit E (452 aa).

A PCI domain is found at 257–426 (TDLFFSPAYI…GTVIMNHPPQ (170 aa)).

This sequence belongs to the eIF-3 subunit E family. Component of the eukaryotic translation initiation factor 3 (eIF-3) complex.

Its subcellular location is the cytoplasm. In terms of biological role, component of the eukaryotic translation initiation factor 3 (eIF-3) complex, which is involved in protein synthesis of a specialized repertoire of mRNAs and, together with other initiation factors, stimulates binding of mRNA and methionyl-tRNAi to the 40S ribosome. The eIF-3 complex specifically targets and initiates translation of a subset of mRNAs involved in cell proliferation. The polypeptide is Eukaryotic translation initiation factor 3 subunit E (int6) (Aspergillus niger (strain ATCC MYA-4892 / CBS 513.88 / FGSC A1513)).